The chain runs to 262 residues: Protein N-terminal and lysine N-methyltransferase EFM7 (262 aa).

Residues Trp59, 86–88 (GAA), Asp108, Trp143, and Ser171 contribute to the S-adenosyl-L-methionine site.

The protein belongs to the class I-like SAM-binding methyltransferase superfamily. EFM7 family.

It localises to the cytoplasm. S-adenosyl-L-methionine-dependent protein methyltransferase that trimethylates the N-terminal glycine 'Gly-2' of elongation factor 1-alpha, before also catalyzing the mono- and dimethylation of 'Lys-3'. The sequence is that of Protein N-terminal and lysine N-methyltransferase EFM7 from Candida albicans (strain SC5314 / ATCC MYA-2876) (Yeast).